A 520-amino-acid polypeptide reads, in one-letter code: Cyclic GMP-AMP synthase-like receptor (520 aa).

Residues Ser68 and 80 to 82 (EFD) contribute to the ATP site. Positions 80, 82, and 198 each coordinate Mg(2+). GTP is bound at residue Asp198. Lys264 serves as a coordination point for ATP. Residues Leu288 and Asp294 each coordinate Mn(2+).

This sequence belongs to the mab-21 family. Mg(2+) is required as a cofactor. Mn(2+) serves as cofactor.

It carries out the reaction GTP + ATP = 2',3'-cGAMP + 2 diphosphate. The catalysed reaction is GTP + ATP = pppGp(2'-5')A + diphosphate. It catalyses the reaction pppGp(2'-5')A = 2',3'-cGAMP + diphosphate. Nucleotidyltransferase that catalyzes the formation of cyclic GMP-AMP (2',3'-cGAMP) from ATP and GTP and plays a key role in innate immunity. Acts as a key sensor of double-stranded RNA (dsRNA), the presence of dsRNA in the cytoplasm being a danger signal that triggers the immune responses. Directly binds dsRNA, activating the nucleotidyltransferase activity, leading to synthesis of 2',3'-cGAMP, a second messenger that binds to and activates Sting, thereby triggering the immune response via activation of the NF-kappa-B transcription factor. The sequence is that of Cyclic GMP-AMP synthase-like receptor from Microplitis demolitor (Parasitoid wasp).